The following is a 282-amino-acid chain: Bis(5'-nucleosyl)-tetraphosphatase, symmetrical (282 aa).

Belongs to the Ap4A hydrolase family.

It catalyses the reaction P(1),P(4)-bis(5'-adenosyl) tetraphosphate + H2O = 2 ADP + 2 H(+). In terms of biological role, hydrolyzes diadenosine 5',5'''-P1,P4-tetraphosphate to yield ADP. This Escherichia coli O7:K1 (strain IAI39 / ExPEC) protein is Bis(5'-nucleosyl)-tetraphosphatase, symmetrical.